Consider the following 577-residue polypeptide: MKYSKIPVARSVVALCVAKDIKHVVISPGSRNAPLTIGFTHHDEITPYSIVDERCAAFFALGLAQELKKPVALVCTSGSALLNYYPAIAEAYYSDIPLVIISADRPIERIDIGDGQTIRQKNVFENHILYSANLYSELVLENQSQDPKLQQKQFEAQKHNEREVNLALNKAIEEKGPVHINVPFYEPLYDTVENINVNPLQIFPEIKERHYSEKQLQNYANEWNRAERKMVIVGVAQPNAVEQKFLEGLATDPSVIVLTETTSNLHQEQFFTRIDTLIGPIEKDENREELFNRLQPDILLTFGGMIVSKKIKSFLRNYSPQHHWHIDSKKAYNTFFCLNKHFETDVNSFFSEFFPLTKRTESDYGSFWKDIKGKRQHRHEDYMAEIPYSDLKAMQEIYQKIPKNSVLHFGNSSTIRYAQLFEWDKSLKIYCNRGTSGIDGSVSTAVGASVSSEEPVTIITGDLSFFYDSNALWNNYIPSNFRIIILNNNGGGIFRILPGNKNSENFEKYFETTHNLKAKPICDLYNFDYEKANSEEEIQKVMKDFYSESGKPKLLEIFTPRKINDEVLLEYFNFMKS.

The protein belongs to the TPP enzyme family. MenD subfamily. As to quaternary structure, homodimer. Mg(2+) is required as a cofactor. The cofactor is Mn(2+). Thiamine diphosphate serves as cofactor.

It carries out the reaction isochorismate + 2-oxoglutarate + H(+) = 5-enolpyruvoyl-6-hydroxy-2-succinyl-cyclohex-3-ene-1-carboxylate + CO2. It functions in the pathway quinol/quinone metabolism; 1,4-dihydroxy-2-naphthoate biosynthesis; 1,4-dihydroxy-2-naphthoate from chorismate: step 2/7. Its pathway is quinol/quinone metabolism; menaquinone biosynthesis. In terms of biological role, catalyzes the thiamine diphosphate-dependent decarboxylation of 2-oxoglutarate and the subsequent addition of the resulting succinic semialdehyde-thiamine pyrophosphate anion to isochorismate to yield 2-succinyl-5-enolpyruvyl-6-hydroxy-3-cyclohexene-1-carboxylate (SEPHCHC). The protein is 2-succinyl-5-enolpyruvyl-6-hydroxy-3-cyclohexene-1-carboxylate synthase of Christiangramia forsetii (strain DSM 17595 / CGMCC 1.15422 / KT0803) (Gramella forsetii).